The following is a 56-amino-acid chain: Hydrophobic protein LTI6A (56 aa).

2 consecutive transmembrane segments (helical) span residues 11-31 (IILA…CGIE) and 34-54 (ICLL…VWVI).

It belongs to the UPF0057 (PMP3) family. As to expression, expressed in shoot of cold stressed seedlings.

The protein localises to the membrane. Its function is as follows. Plays a role in the regulation of membrane potential. Could mediate a proton leak. The chain is Hydrophobic protein LTI6A (LTI6A) from Oryza sativa subsp. japonica (Rice).